Here is a 175-residue protein sequence, read N- to C-terminus: Large ribosomal subunit protein uL6 (175 aa).

It belongs to the universal ribosomal protein uL6 family. In terms of assembly, part of the 50S ribosomal subunit.

In terms of biological role, this protein binds to the 23S rRNA, and is important in its secondary structure. It is located near the subunit interface in the base of the L7/L12 stalk, and near the tRNA binding site of the peptidyltransferase center. In Xanthomonas campestris pv. campestris (strain 8004), this protein is Large ribosomal subunit protein uL6.